Here is a 471-residue protein sequence, read N- to C-terminus: Glutamate--tRNA ligase (471 aa).

The 'HIGH' region motif lies at 9–19; the sequence is PSPTGYLHVGG. Zn(2+)-binding residues include Cys98, Cys100, Cys125, and His127. The 'KMSKS' region motif lies at 237–241; sequence KLSKR. Lys240 lines the ATP pocket.

This sequence belongs to the class-I aminoacyl-tRNA synthetase family. Glutamate--tRNA ligase type 1 subfamily. Monomer. The cofactor is Zn(2+).

The protein localises to the cytoplasm. It carries out the reaction tRNA(Glu) + L-glutamate + ATP = L-glutamyl-tRNA(Glu) + AMP + diphosphate. Its function is as follows. Catalyzes the attachment of glutamate to tRNA(Glu) in a two-step reaction: glutamate is first activated by ATP to form Glu-AMP and then transferred to the acceptor end of tRNA(Glu). This is Glutamate--tRNA ligase from Enterobacter sp. (strain 638).